The following is a 118-amino-acid chain: UPF0295 protein BCE33L0445 (118 aa).

The next 2 membrane-spanning stretches (helical) occupy residues 12–32 and 43–63; these read IRTF…LGVF and FMMV…WIGM.

This sequence belongs to the UPF0295 family.

The protein localises to the cell membrane. This chain is UPF0295 protein BCE33L0445, found in Bacillus cereus (strain ZK / E33L).